Reading from the N-terminus, the 294-residue chain is GTPase Era (294 aa).

One can recognise an Era-type G domain in the interval 2-171 (NSGVVTIIGR…LSLLIELLPE (170 aa)). The segment at 10 to 17 (GRPSAGKS) is G1. 10 to 17 (GRPSAGKS) is a GTP binding site. Positions 36–40 (QTTRN) are G2. The interval 57-60 (DTPG) is G3. Residues 57–61 (DTPGY) and 119–122 (NKAD) contribute to the GTP site. Residues 119–122 (NKAD) form a G4 region. The tract at residues 150-152 (ISA) is G5. One can recognise a KH type-2 domain in the interval 202–280 (TREEIPHALY…QLDLQVRVNK (79 aa)).

The protein belongs to the TRAFAC class TrmE-Era-EngA-EngB-Septin-like GTPase superfamily. Era GTPase family. Monomer.

It is found in the cytoplasm. Its subcellular location is the cell inner membrane. An essential GTPase that binds both GDP and GTP, with rapid nucleotide exchange. Plays a role in 16S rRNA processing and 30S ribosomal subunit biogenesis and possibly also in cell cycle regulation and energy metabolism. The chain is GTPase Era from Treponema denticola (strain ATCC 35405 / DSM 14222 / CIP 103919 / JCM 8153 / KCTC 15104).